The following is a 156-amino-acid chain: MNLNASMFGQAISFVIFVWLCMKYVWPPLVKLLDERRAEIAQGLEQTEKAAQELELAKANGEALLTEARSKAQAIINQGKQRQEQMVAEAVDLANQEKARIVAEGKAEVESERSKVRQELKDEMADLVIESASKLINRNLDSSANRDLVNRFINEM.

The chain crosses the membrane as a helical span at residues 6–26 (SMFGQAISFVIFVWLCMKYVW).

This sequence belongs to the ATPase B chain family. In terms of assembly, F-type ATPases have 2 components, F(1) - the catalytic core - and F(0) - the membrane proton channel. F(1) has five subunits: alpha(3), beta(3), gamma(1), delta(1), epsilon(1). F(0) has three main subunits: a(1), b(2) and c(10-14). The alpha and beta chains form an alternating ring which encloses part of the gamma chain. F(1) is attached to F(0) by a central stalk formed by the gamma and epsilon chains, while a peripheral stalk is formed by the delta and b chains.

It localises to the cell inner membrane. Its function is as follows. F(1)F(0) ATP synthase produces ATP from ADP in the presence of a proton or sodium gradient. F-type ATPases consist of two structural domains, F(1) containing the extramembraneous catalytic core and F(0) containing the membrane proton channel, linked together by a central stalk and a peripheral stalk. During catalysis, ATP synthesis in the catalytic domain of F(1) is coupled via a rotary mechanism of the central stalk subunits to proton translocation. In terms of biological role, component of the F(0) channel, it forms part of the peripheral stalk, linking F(1) to F(0). This Vibrio campbellii (strain ATCC BAA-1116) protein is ATP synthase subunit b 2.